We begin with the raw amino-acid sequence, 286 residues long: Ribosomal RNA small subunit methyltransferase A (286 aa).

S-adenosyl-L-methionine is bound by residues H11, L13, G44, E65, D90, and N115.

The protein belongs to the class I-like SAM-binding methyltransferase superfamily. rRNA adenine N(6)-methyltransferase family. RsmA subfamily.

It localises to the cytoplasm. The catalysed reaction is adenosine(1518)/adenosine(1519) in 16S rRNA + 4 S-adenosyl-L-methionine = N(6)-dimethyladenosine(1518)/N(6)-dimethyladenosine(1519) in 16S rRNA + 4 S-adenosyl-L-homocysteine + 4 H(+). Its function is as follows. Specifically dimethylates two adjacent adenosines (A1518 and A1519) in the loop of a conserved hairpin near the 3'-end of 16S rRNA in the 30S particle. May play a critical role in biogenesis of 30S subunits. This is Ribosomal RNA small subunit methyltransferase A from Nostoc punctiforme (strain ATCC 29133 / PCC 73102).